Reading from the N-terminus, the 402-residue chain is Multidrug resistance protein MdtH (402 aa).

Transmembrane regions (helical) follow at residues Tyr13 to Ile33, Ser34 to Leu54, Pro99 to Phe116, Leu139 to Leu159, Leu165 to Leu185, Val214 to Met234, Ala243 to Leu263, Leu277 to Leu297, Leu300 to Thr320, Leu340 to Gly360, and Leu368 to Phe388.

This sequence belongs to the major facilitator superfamily. DHA1 family. MdtH (TC 2.A.1.2.21) subfamily.

The protein localises to the cell inner membrane. The protein is Multidrug resistance protein MdtH of Cronobacter sakazakii (strain ATCC BAA-894) (Enterobacter sakazakii).